The sequence spans 252 residues: Small ribosomal subunit protein uS2 (252 aa).

Ser-2 bears the N-acetylserine mark. A compositionally biased stretch (low complexity) spans 213–222; it reads QVAEETAGAA. Positions 213-252 are disordered; the sequence is QVAEETAGAATEEEEAKEEVTEEQTEATEWAEETTEAVAW. Over residues 223 to 252 the composition is skewed to acidic residues; that stretch reads TEEEEAKEEVTEEQTEATEWAEETTEAVAW.

The protein belongs to the universal ribosomal protein uS2 family. In terms of assembly, component of the small ribosomal subunit. Mature ribosomes consist of a small (40S) and a large (60S) subunit. The 40S subunit contains about 33 different proteins and 1 molecule of RNA (18S). The 60S subunit contains about 49 different proteins and 3 molecules of RNA (25S, 5.8S and 5S). Interacts with RPS21.

The protein resides in the cytoplasm. Its function is as follows. Required for the assembly and/or stability of the 40S ribosomal subunit. Required for the processing of the 20S rRNA-precursor to mature 18S rRNA in a late step of the maturation of 40S ribosomal subunits. The chain is Small ribosomal subunit protein uS2 from Zygosaccharomyces rouxii (strain ATCC 2623 / CBS 732 / NBRC 1130 / NCYC 568 / NRRL Y-229).